The following is a 235-amino-acid chain: Pro-opiomelanocortin (235 aa).

Positions 1 to 26 (MPRFCYSRSGALLLALLLQTSIDVWS) are cleaved as a signal peptide. A Phenylalanine amide modification is found at phenylalanine 87. Residues 88 to 126 (GPRNSSSAGSAAQRRAEEEAVWGDGSPEPSPREGKRSYS) form a disordered region. Over residues 90–100 (RNSSSAGSAAQ) the composition is skewed to low complexity. A glycan (N-linked (GlcNAc...) asparagine) is linked at asparagine 91. Residues 103–121 (AEEEAVWGDGSPEPSPREG) constitute a propeptide that is removed on maturation. Residues 117–126 (SPREGKRSYS) show a composition bias toward basic and acidic residues. Serine 124 carries the N-acetylserine; in Corticotropin modification. A Valine amide modification is found at valine 136. Asparagine 152 carries an N-linked (GlcNAc...) asparagine glycan. Phosphoserine is present on serine 154. Residues 179 to 210 (ESDAEKDDGPYRVEHFRWSNPPKDKRYGGFMT) form a disordered region. Positions 185-205 (DDGPYRVEHFRWSNPPKDKRY) are enriched in basic and acidic residues.

It belongs to the POMC family. Specific enzymatic cleavages at paired basic residues yield the different active peptides. ACTH and MSH are produced by the pituitary gland.

The protein localises to the secreted. Stimulates the adrenal glands to release cortisol. Its function is as follows. Anorexigenic peptide. Increases the pigmentation of skin by increasing melanin production in melanocytes. Functionally, increases the pigmentation of skin by increasing melanin production in melanocytes. In terms of biological role, endogenous orexigenic opiate. Endogenous opiate. This is Pro-opiomelanocortin (Pomc) from Mus musculus (Mouse).